The following is a 467-amino-acid chain: Cysteine--tRNA ligase (467 aa).

Cys28 lines the Zn(2+) pocket. A 'HIGH' region motif is present at residues 30–40 (MTVYDHCHLGH). Zn(2+) contacts are provided by Cys209, His234, and Glu238. The 'KMSKS' region signature appears at 266–270 (KMSKS). Residue Lys269 participates in ATP binding.

The protein belongs to the class-I aminoacyl-tRNA synthetase family. In terms of assembly, monomer. The cofactor is Zn(2+).

The protein resides in the cytoplasm. It catalyses the reaction tRNA(Cys) + L-cysteine + ATP = L-cysteinyl-tRNA(Cys) + AMP + diphosphate. This chain is Cysteine--tRNA ligase, found in Nitrosomonas eutropha (strain DSM 101675 / C91 / Nm57).